The sequence spans 356 residues: Alternative oxidase, mitochondrial (356 aa).

A helical membrane pass occupies residues 152 to 172 (VIRFIFLETVAGVPGMVGGML). 3 residues coordinate Fe cation: Glu-159, Glu-198, and His-201. The chain crosses the membrane as a helical span at residues 217–237 (LMVLGAQGVFFNGFFISYLIS). Residues Glu-249, Glu-304, and His-307 each contribute to the Fe cation site. The disordered stretch occupies residues 330-356 (YDNPEAPHPTKSAEIVKPTGWERDEVI).

Belongs to the alternative oxidase family. Requires Fe cation as cofactor.

The protein resides in the mitochondrion inner membrane. Catalyzes cyanide-resistant oxygen consumption. May increase respiration when the cytochrome respiratory pathway is restricted, or in response to low temperatures. This chain is Alternative oxidase, mitochondrial (AOX1), found in Ajellomyces capsulatus (Darling's disease fungus).